A 79-amino-acid chain; its full sequence is Conotoxin Leo-O1 (79 aa).

Residues 1–22 (MKLTCMMLVAVLFLTAWTFVTA) form the signal peptide. A propeptide spanning residues 23–51 (NVSRNGLENLFPEERHEMMNPEAAKLNNR) is cleaved from the precursor. 3 cysteine pairs are disulfide-bonded: Cys-53/Cys-70, Cys-60/Cys-74, and Cys-69/Cys-78.

It belongs to the conotoxin O1 superfamily. Expressed by the venom duct.

The protein localises to the secreted. The chain is Conotoxin Leo-O1 from Conus leopardus (Leopard cone).